Consider the following 145-residue polypeptide: UPF0735 ACT domain-containing protein CLD_1535 (145 aa).

In terms of domain architecture, ACT spans 69–144 (TIGLLLGHER…NVIKVDLIAM (76 aa)).

It belongs to the UPF0735 family.

The chain is UPF0735 ACT domain-containing protein CLD_1535 from Clostridium botulinum (strain Okra / Type B1).